Here is a 306-residue protein sequence, read N- to C-terminus: Ribosomal RNA small subunit methyltransferase H (306 aa).

S-adenosyl-L-methionine is bound by residues 33 to 35, Asp-51, Phe-82, Asp-96, and Gln-103; that span reads GGY.

This sequence belongs to the methyltransferase superfamily. RsmH family.

It localises to the cytoplasm. The enzyme catalyses cytidine(1402) in 16S rRNA + S-adenosyl-L-methionine = N(4)-methylcytidine(1402) in 16S rRNA + S-adenosyl-L-homocysteine + H(+). Specifically methylates the N4 position of cytidine in position 1402 (C1402) of 16S rRNA. The polypeptide is Ribosomal RNA small subunit methyltransferase H (Rickettsia akari (strain Hartford)).